A 634-amino-acid chain; its full sequence is MPVASSEYQNEHYASFATTSRLVTCLVSETLVPVFFVPVKSVDRNNQFIGLCLLLRPTTVKQESELPTNITASDILTVVPLRGLPILNNERVALFNGIRCPQIDLVDFLDMLPHIYSVESSGSLKSGDSLKQKTFDTLSAILDGNKTFDLVDGYSAVQLWNHFAQDLEINSKLREQIGQELGSSILFQKYTYDNPKPLPTLNSSTIKWEQSVVEGHATHPMHKARKSFPPMPPLNPGSYDLDHPAVRLVGIPRENAILRGEYEELSAPLVNALMDAGGNHKDIRAQYQNYVFIAIHELQLPNIQEKFKDAVIFSKEHQLNVEALASLRSVARPDILPGLSVKLCLGIKISSALRTVTPFTTYFGPGFSFNVVPKLTYDHEVLAIERELGTITYRHEDSDVAKHCSSVIREALEYDPKYQDDLFIPCGALVEKIQRPDTDETLVAHVWNLDTKEKRVEFLDRYVDFALRSFLPPCLINGVAFEAHGQNTLARFDRKTGLLKGFVIRDFGGVKAHNETLKKSAGVELDILPDSCVEAHSLEEVFKLLYHTLFHCQLQRLIRVLDLHYSGEGWEIVRKYLTQYVPKDHVMWPMFMESSKVPGKCLVRMKIDELYRDYIYRPVPNMIKYEPQSVPEAI.

In terms of biological role, NRPS-independent siderophore synthetase that catalyzes the rhizoferrin biosynthesis from citrate and diaminobutane via an ATP-dependent condensation of citrate with diaminobutane followed by the addition of a second citrate to the monocitryl-diaminobutane intermediate. Can also use as substrates the citrate and diaminobutane homologs oxaloacetic acid, diaminopropane, diaminobutane, diaminopentane, tricarballylic acid, hydroxylamine and ornithine. Forms only a mono-substituted intermediate with oxaloacetic acid and diaminopentane whereas both mono-citryl intermediates and full rhizoferrin derivatives were detected when diaminopropane, and ornithine were used as substrates. Tricarballylic acid only forms a rhizoferrin derivative, but no mono-substituted intermediate. This chain is NRPS-independent siderophore synthetase rfs, found in Rhizopus delemar (strain RA 99-880 / ATCC MYA-4621 / FGSC 9543 / NRRL 43880) (Mucormycosis agent).